The chain runs to 361 residues: tRNA-specific 2-thiouridylase MnmA (361 aa).

ATP-binding positions include 11–18 (GMSGGVDS) and M37. C106 functions as the Nucleophile in the catalytic mechanism. Cysteines 106 and 202 form a disulfide. An ATP-binding site is contributed by G130. An interaction with tRNA region spans residues 152–154 (KDQ). The Cysteine persulfide intermediate role is filled by C202. The tract at residues 308-309 (RY) is interaction with tRNA.

The protein belongs to the MnmA/TRMU family.

The protein resides in the cytoplasm. It catalyses the reaction S-sulfanyl-L-cysteinyl-[protein] + uridine(34) in tRNA + AH2 + ATP = 2-thiouridine(34) in tRNA + L-cysteinyl-[protein] + A + AMP + diphosphate + H(+). Functionally, catalyzes the 2-thiolation of uridine at the wobble position (U34) of tRNA, leading to the formation of s(2)U34. The polypeptide is tRNA-specific 2-thiouridylase MnmA (Clostridium botulinum (strain Alaska E43 / Type E3)).